Here is a 373-residue protein sequence, read N- to C-terminus: Flagellar P-ring protein (373 aa).

Residues methionine 1–alanine 26 form the signal peptide.

This sequence belongs to the FlgI family. The basal body constitutes a major portion of the flagellar organelle and consists of four rings (L,P,S, and M) mounted on a central rod.

The protein localises to the periplasm. The protein resides in the bacterial flagellum basal body. Functionally, assembles around the rod to form the L-ring and probably protects the motor/basal body from shearing forces during rotation. In Rhizobium etli (strain CIAT 652), this protein is Flagellar P-ring protein.